We begin with the raw amino-acid sequence, 1099 residues long: Zinc finger protein basonuclin-2 (1099 aa).

The tract at residues 45–66 is disordered; sequence EEAEVDVRERETQRDREPKRAR. Over residues 49–66 the composition is skewed to basic and acidic residues; that stretch reads VDVRERETQRDREPKRAR. Lys-277 participates in a covalent cross-link: Glycyl lysine isopeptide (Lys-Gly) (interchain with G-Cter in SUMO2). The tract at residues 357–385 is disordered; it reads LSTQNEYNESSESEVSPTPYKNDQTPNRN. The segment covering 361–372 has biased composition (low complexity); sequence NEYNESSESEVS. Positions 375 to 385 are enriched in polar residues; the sequence is PYKNDQTPNRN. Residues Lys-396, Lys-416, and Lys-421 each participate in a glycyl lysine isopeptide (Lys-Gly) (interchain with G-Cter in SUMO2) cross-link. A disordered region spans residues 397 to 423; it reads TEPACVSPIQNSAPVSDLTKTEHPKSS. The C2H2-type 1 zinc-finger motif lies at 441–464; that stretch reads VFCNACGKTFYDKGTLKIHYNAVH. Ser-561 carries the post-translational modification Phosphoserine. 2 disordered regions span residues 622 to 641 and 648 to 742; these read EPSADLAPKKKPRKSSMPVK and DTAD…EGDE. Lys-641 participates in a covalent cross-link: Glycyl lysine isopeptide (Lys-Gly) (interchain with G-Cter in SUMO2). The span at 648 to 661 shows a compositional bias: acidic residues; that stretch reads DTADEFDDEDDDPN. Basic and acidic residues-rich tracts occupy residues 670–680 and 719–742; these read MSHDNHCHSQE and ERDYENESESSEPKLGEESMEGDE. The C2H2-type 2 zinc finger occupies 833-856; the sequence is KICYVCKKSFKSSYSVKLHYRNVH. Residues Lys-894 and Lys-919 each participate in a glycyl lysine isopeptide (Lys-Gly) (interchain with G-Cter in SUMO2) cross-link. 2 disordered regions span residues 929–948 and 968–1008; these read LDVREDASSPAGTEDSHLNG and LQSS…KAEA. The span at 982–995 shows a compositional bias: acidic residues; sequence AGSDEGILLDDIDG. C2H2-type zinc fingers lie at residues 1035-1058 and 1063-1090; these read IMCNICHKMYSNKGTLRVHYKTVH and HKCKVPGCNMMFSSVRSRNRHSQNPNLH. Residues 1079-1099 form a disordered region; the sequence is SRNRHSQNPNLHKNIPFTSVD.

As to expression, highly expressed in testis, uterus and small intestine, and weakly expressed in colon and prostate. Also expressed in skin, primary keratinocytes, immortalized keratinocytes, and HeLa and HEK293 cells. Not detected in blood, thymus, spleen or Hep-G2 cells.

The protein resides in the nucleus. Its function is as follows. Probable transcription factor specific for skin keratinocytes. May play a role in the differentiation of spermatozoa and oocytes. May also play an important role in early urinary-tract development. This is Zinc finger protein basonuclin-2 from Homo sapiens (Human).